The sequence spans 48 residues: U-actitoxin-Cgg3 (48 aa).

Disulfide bonds link cysteine 5/cysteine 41, cysteine 7/cysteine 33, and cysteine 23/cysteine 42. Position 46 is a serine amide (serine 46). A propeptide spans 47–48 (removed in mature form); the sequence is GR.

Belongs to the sea anemone type 3 (BDS) potassium channel toxin family.

Its subcellular location is the secreted. In terms of biological role, neurotoxin that induces paralysis when injected into crabs. May function in antimicrobial activity as it displays inhibitory activity towards the B.licheniformis enzyme subtilisin A (SUBTA) and the recombinant S.maltophilia protease 1 (rStmPr1) enzyme. Also displays inhibitory activity against various proteases including the porcine pancreatic elastase (PPE) and proteinase K (PK). The chain is U-actitoxin-Cgg3 from Condylactis gigantea (Giant Caribbean anemone).